The following is a 499-amino-acid chain: Cytochrome P450 81E8 (499 aa).

The helical transmembrane segment at 3 to 23 (TFYLSLIISLFFLIITLKVFF) threads the bilayer. Cys-436 contacts heme.

The protein belongs to the cytochrome P450 family. Heme serves as cofactor.

Its subcellular location is the membrane. Its function is as follows. Probable monooxygenases exhibiting no activity with isoflavones such as formononetin, biochanin A, pseudobaptigenin, daidzein, genistein, isoformononetin and prunetin, or with flavonoids including naringenin, liquiritigenin, apigenin, luteolin, or kaempferol. The polypeptide is Cytochrome P450 81E8 (Medicago truncatula (Barrel medic)).